The sequence spans 290 residues: Small ribosomal subunit protein bS6 (290 aa).

A disordered region spans residues 208-233; that stretch reads VEEAKTTAKKPAAPKMSAAERAKVDG.

Belongs to the bacterial ribosomal protein bS6 family.

Its function is as follows. Binds together with bS18 to 16S ribosomal RNA. The chain is Small ribosomal subunit protein bS6 from Mesoplasma florum (strain ATCC 33453 / NBRC 100688 / NCTC 11704 / L1) (Acholeplasma florum).